Consider the following 258-residue polypeptide: Acetylglutamate kinase (258 aa).

Substrate is bound by residues 44–45, Arg66, and Asn158; that span reads GG. ATP contacts are provided by residues 181-186 and 209-211; these read DVSGIL and IIT.

It belongs to the acetylglutamate kinase family. ArgB subfamily. In terms of assembly, homodimer.

Its subcellular location is the cytoplasm. It catalyses the reaction N-acetyl-L-glutamate + ATP = N-acetyl-L-glutamyl 5-phosphate + ADP. It functions in the pathway amino-acid biosynthesis; L-arginine biosynthesis; N(2)-acetyl-L-ornithine from L-glutamate: step 2/4. Its function is as follows. Catalyzes the ATP-dependent phosphorylation of N-acetyl-L-glutamate. The chain is Acetylglutamate kinase from Salmonella arizonae (strain ATCC BAA-731 / CDC346-86 / RSK2980).